The following is a 204-amino-acid chain: Urease accessory protein UreG (204 aa).

11 to 18 is a GTP binding site; it reads GPVGAGKT.

This sequence belongs to the SIMIBI class G3E GTPase family. UreG subfamily. As to quaternary structure, homodimer. UreD, UreF and UreG form a complex that acts as a GTP-hydrolysis-dependent molecular chaperone, activating the urease apoprotein by helping to assemble the nickel containing metallocenter of UreC. The UreE protein probably delivers the nickel.

Its subcellular location is the cytoplasm. In terms of biological role, facilitates the functional incorporation of the urease nickel metallocenter. This process requires GTP hydrolysis, probably effectuated by UreG. This Staphylococcus aureus (strain bovine RF122 / ET3-1) protein is Urease accessory protein UreG.